The chain runs to 413 residues: MKSEELFSQAKELMPGGVSSPVRAIKPYPFYTAHAQGAHITTVDGEDLIDCCMAYGPLLLGHAHPEIKKAIAAQLEKGWLYGTPTPYEPEFARLITGDHPGMEMARFVSSGSEATMAAIRLARGFTGKSDIIKIEGGFHGAHDAVLVKAGSGATTMGVPDSAGVLPALVAHTRQLPYNDAEALEAMLASHHDIAALIIEPVLGNIGPVLPEDHYLREIREITSAYGVLLIFDEVITGYRLGIGGAQRMFGVKPDLTTLGKIIGGGLPIGAFCGRKEIMSLVAPQGPVYQAGTFSGNPLSLAAGIATIRWLHDHPGIYPDLAEKARAIGDSIGGGAGGSFVRIGSMFKYFFRDSAPKNYTEVKECDTAAFGRFWEKMRARGIFLPPSQFETNFLSAAHTSDDLATLAGGYTACL.

K260 carries the N6-(pyridoxal phosphate)lysine modification.

This sequence belongs to the class-III pyridoxal-phosphate-dependent aminotransferase family. HemL subfamily. It depends on pyridoxal 5'-phosphate as a cofactor.

It is found in the cytoplasm. It carries out the reaction (S)-4-amino-5-oxopentanoate = 5-aminolevulinate. It functions in the pathway porphyrin-containing compound metabolism; protoporphyrin-IX biosynthesis; 5-aminolevulinate from L-glutamyl-tRNA(Glu): step 2/2. This is Glutamate-1-semialdehyde 2,1-aminomutase from Methanoregula boonei (strain DSM 21154 / JCM 14090 / 6A8).